The following is a 153-amino-acid chain: SsrA-binding protein (153 aa).

The protein belongs to the SmpB family.

The protein localises to the cytoplasm. In terms of biological role, required for rescue of stalled ribosomes mediated by trans-translation. Binds to transfer-messenger RNA (tmRNA), required for stable association of tmRNA with ribosomes. tmRNA and SmpB together mimic tRNA shape, replacing the anticodon stem-loop with SmpB. tmRNA is encoded by the ssrA gene; the 2 termini fold to resemble tRNA(Ala) and it encodes a 'tag peptide', a short internal open reading frame. During trans-translation Ala-aminoacylated tmRNA acts like a tRNA, entering the A-site of stalled ribosomes, displacing the stalled mRNA. The ribosome then switches to translate the ORF on the tmRNA; the nascent peptide is terminated with the 'tag peptide' encoded by the tmRNA and targeted for degradation. The ribosome is freed to recommence translation, which seems to be the essential function of trans-translation. This chain is SsrA-binding protein, found in Orientia tsutsugamushi (strain Boryong) (Rickettsia tsutsugamushi).